We begin with the raw amino-acid sequence, 430 residues long: Trigger factor (430 aa).

Positions 163 to 248 (GDVVDVDYKG…LNSIKTSILP (86 aa)) constitute a PPIase FKBP-type domain.

Belongs to the FKBP-type PPIase family. Tig subfamily.

The protein resides in the cytoplasm. The enzyme catalyses [protein]-peptidylproline (omega=180) = [protein]-peptidylproline (omega=0). Its function is as follows. Involved in protein export. Acts as a chaperone by maintaining the newly synthesized protein in an open conformation. Functions as a peptidyl-prolyl cis-trans isomerase. The sequence is that of Trigger factor from Lawsonia intracellularis (strain PHE/MN1-00).